The following is a 334-amino-acid chain: Protein-methionine-sulfoxide reductase catalytic subunit MsrP (334 aa).

The tat-type signal signal peptide spans 1-44 (MKKVSRLTEADVTAESAFFMQRRQVLKALGITTAALSLPTAAHA). Mo-molybdopterin contacts are provided by residues asparagine 88, 91–92 (YE), cysteine 146, threonine 181, asparagine 233, arginine 238, and 249–251 (GIK).

Belongs to the MsrP family. In terms of assembly, heterodimer of a catalytic subunit (MsrP) and a heme-binding subunit (MsrQ). Mo-molybdopterin is required as a cofactor. Predicted to be exported by the Tat system. The position of the signal peptide cleavage has not been experimentally proven.

It localises to the periplasm. It carries out the reaction L-methionyl-[protein] + a quinone + H2O = L-methionyl-(S)-S-oxide-[protein] + a quinol. The enzyme catalyses L-methionyl-[protein] + a quinone + H2O = L-methionyl-(R)-S-oxide-[protein] + a quinol. Its function is as follows. Part of the MsrPQ system that repairs oxidized periplasmic proteins containing methionine sulfoxide residues (Met-O), using respiratory chain electrons. Thus protects these proteins from oxidative-stress damage caused by reactive species of oxygen and chlorine generated by the host defense mechanisms. MsrPQ is essential for the maintenance of envelope integrity under bleach stress, rescuing a wide series of structurally unrelated periplasmic proteins from methionine oxidation. The catalytic subunit MsrP is non-stereospecific, being able to reduce both (R-) and (S-) diastereoisomers of methionine sulfoxide. The sequence is that of Protein-methionine-sulfoxide reductase catalytic subunit MsrP from Cronobacter sakazakii (strain ATCC BAA-894) (Enterobacter sakazakii).